The primary structure comprises 136 residues: S-protein homolog 17 (136 aa).

An N-terminal signal peptide occupies residues 1–22 (MKNLSIFMFVFSLCMFGHVSRA).

Belongs to the plant self-incompatibility (S1) protein family.

Its subcellular location is the secreted. The sequence is that of S-protein homolog 17 from Arabidopsis thaliana (Mouse-ear cress).